Reading from the N-terminus, the 179-residue chain is Large ribosomal subunit protein uL5 (179 aa).

It belongs to the universal ribosomal protein uL5 family. In terms of assembly, part of the 50S ribosomal subunit; part of the 5S rRNA/L5/L18/L25 subcomplex. Contacts the 5S rRNA and the P site tRNA. Forms a bridge to the 30S subunit in the 70S ribosome.

In terms of biological role, this is one of the proteins that bind and probably mediate the attachment of the 5S RNA into the large ribosomal subunit, where it forms part of the central protuberance. In the 70S ribosome it contacts protein S13 of the 30S subunit (bridge B1b), connecting the 2 subunits; this bridge is implicated in subunit movement. Contacts the P site tRNA; the 5S rRNA and some of its associated proteins might help stabilize positioning of ribosome-bound tRNAs. The protein is Large ribosomal subunit protein uL5 of Dehalococcoides mccartyi (strain ATCC BAA-2100 / JCM 16839 / KCTC 5957 / BAV1).